A 435-amino-acid polypeptide reads, in one-letter code: Glutamyl-tRNA reductase (435 aa).

Substrate contacts are provided by residues 49-52 (TCNR), S109, 114-116 (ETQ), and Q120. The active-site Nucleophile is C50. An NADP(+)-binding site is contributed by 189–194 (GAGEMS).

Belongs to the glutamyl-tRNA reductase family. Homodimer.

The catalysed reaction is (S)-4-amino-5-oxopentanoate + tRNA(Glu) + NADP(+) = L-glutamyl-tRNA(Glu) + NADPH + H(+). The protein operates within porphyrin-containing compound metabolism; protoporphyrin-IX biosynthesis; 5-aminolevulinate from L-glutamyl-tRNA(Glu): step 1/2. In terms of biological role, catalyzes the NADPH-dependent reduction of glutamyl-tRNA(Glu) to glutamate 1-semialdehyde (GSA). This is Glutamyl-tRNA reductase from Listeria monocytogenes serovar 1/2a (strain ATCC BAA-679 / EGD-e).